A 354-amino-acid chain; its full sequence is Holliday junction branch migration complex subunit RuvB (354 aa).

Residues 4 to 191 (TDKLAAPARV…FGIVARLEFY (188 aa)) are large ATPase domain (RuvB-L). ATP is bound by residues L30, R31, G72, K75, T76, T77, 138 to 140 (EDY), R181, Y191, and R228. Mg(2+) is bound at residue T76. Positions 192–262 (TAEELARIVT…MADAALAMLD (71 aa)) are small ATPAse domain (RuvB-S). Residues 265–354 (RVGFDLMDRK…GDAGELFGDA (90 aa)) form a head domain (RuvB-H) region. Residues R301, R320, and R325 each contribute to the DNA site.

This sequence belongs to the RuvB family. Homohexamer. Forms an RuvA(8)-RuvB(12)-Holliday junction (HJ) complex. HJ DNA is sandwiched between 2 RuvA tetramers; dsDNA enters through RuvA and exits via RuvB. An RuvB hexamer assembles on each DNA strand where it exits the tetramer. Each RuvB hexamer is contacted by two RuvA subunits (via domain III) on 2 adjacent RuvB subunits; this complex drives branch migration. In the full resolvosome a probable DNA-RuvA(4)-RuvB(12)-RuvC(2) complex forms which resolves the HJ.

The protein resides in the cytoplasm. It catalyses the reaction ATP + H2O = ADP + phosphate + H(+). The RuvA-RuvB-RuvC complex processes Holliday junction (HJ) DNA during genetic recombination and DNA repair, while the RuvA-RuvB complex plays an important role in the rescue of blocked DNA replication forks via replication fork reversal (RFR). RuvA specifically binds to HJ cruciform DNA, conferring on it an open structure. The RuvB hexamer acts as an ATP-dependent pump, pulling dsDNA into and through the RuvAB complex. RuvB forms 2 homohexamers on either side of HJ DNA bound by 1 or 2 RuvA tetramers; 4 subunits per hexamer contact DNA at a time. Coordinated motions by a converter formed by DNA-disengaged RuvB subunits stimulates ATP hydrolysis and nucleotide exchange. Immobilization of the converter enables RuvB to convert the ATP-contained energy into a lever motion, pulling 2 nucleotides of DNA out of the RuvA tetramer per ATP hydrolyzed, thus driving DNA branch migration. The RuvB motors rotate together with the DNA substrate, which together with the progressing nucleotide cycle form the mechanistic basis for DNA recombination by continuous HJ branch migration. Branch migration allows RuvC to scan DNA until it finds its consensus sequence, where it cleaves and resolves cruciform DNA. The protein is Holliday junction branch migration complex subunit RuvB of Cupriavidus taiwanensis (strain DSM 17343 / BCRC 17206 / CCUG 44338 / CIP 107171 / LMG 19424 / R1) (Ralstonia taiwanensis (strain LMG 19424)).